The primary structure comprises 336 residues: Fructose-1,6-bisphosphatase class 1 (336 aa).

The Mg(2+) site is built by E92, D115, L117, and D118. Substrate is bound by residues 118–121, N211, Y244, 262–264, and K274; these read DGSS and YLY. E280 is a Mg(2+) binding site.

The protein belongs to the FBPase class 1 family. Homotetramer. Mg(2+) is required as a cofactor.

It is found in the cytoplasm. The enzyme catalyses beta-D-fructose 1,6-bisphosphate + H2O = beta-D-fructose 6-phosphate + phosphate. Its pathway is carbohydrate biosynthesis; gluconeogenesis. In Vibrio cholerae serotype O1 (strain ATCC 39541 / Classical Ogawa 395 / O395), this protein is Fructose-1,6-bisphosphatase class 1.